Reading from the N-terminus, the 238-residue chain is Keratin-associated protein 5-3 (238 aa).

Tandem repeats lie at residues 35 to 38, 41 to 44, 47 to 50, 91 to 94, 150 to 153, 160 to 163, 170 to 173, 189 to 192, 199 to 202, 218 to 221, and 228 to 231. The tract at residues 35–231 is 11 X 4 AA repeats of C-C-X-P; that stretch reads CCVPVCCCKP…CSSQSSCCVP (197 aa).

It belongs to the KRTAP type 5 family. In terms of assembly, interacts with hair keratins. Restricted to hair root, not detected in any other tissues.

In terms of biological role, in the hair cortex, hair keratin intermediate filaments are embedded in an interfilamentous matrix, consisting of hair keratin-associated protein (KRTAP), which are essential for the formation of a rigid and resistant hair shaft through their extensive disulfide bond cross-linking with abundant cysteine residues of hair keratins. The matrix proteins include the high-sulfur and high-glycine-tyrosine keratins. This Homo sapiens (Human) protein is Keratin-associated protein 5-3 (KRTAP5-3).